The following is an 84-amino-acid chain: Cell division topological specificity factor (84 aa).

This sequence belongs to the MinE family.

In terms of biological role, prevents the cell division inhibition by proteins MinC and MinD at internal division sites while permitting inhibition at polar sites. This ensures cell division at the proper site by restricting the formation of a division septum at the midpoint of the long axis of the cell. The chain is Cell division topological specificity factor from Chromohalobacter salexigens (strain ATCC BAA-138 / DSM 3043 / CIP 106854 / NCIMB 13768 / 1H11).